Here is a 605-residue protein sequence, read N- to C-terminus: Insulin-like growth factor-binding protein complex acid labile subunit (605 aa).

The N-terminal stretch at 1-27 (MALRKGGLALALLLLSWVALGPRSLEG) is a signal peptide. The LRRNT domain occupies 32–74 (TPGEAEGPACPAACVCSYDDDADELSVFCSSRNLTRLPDGVPG). 2 disulfides stabilise this stretch: C41-C47 and C45-C60. 3 N-linked (GlcNAc...) asparagine glycosylation sites follow: N64, N85, and N96. LRR repeat units follow at residues 75 to 96 (GTQALWLDGNNLSSVPPAAFQN), 99 to 120 (SLGFLNLQGGQLGSLEPQALLG), 123 to 144 (NLCHLHLERNQLRSLALGTFAH), 147 to 168 (ALASLGLSNNRLSRLEDGLFEG), 171 to 192 (SLWDLNLGWNSLAVLPDAAFRG), 195 to 216 (SLRELVLAGNRLAYLQPALFSG), 219 to 240 (ELRELDLSRNALRAIKANVFVQ), 243 to 264 (RLQKLYLDRNLIAAVAPGAFLG), 267 to 288 (ALRWLDLSHNRVAGLLEDTFPG), 291 to 312 (GLRVLRLSHNAIASLRPRTFKD), 315 to 336 (FLEELQLGHNRIRQLAERSFEG), 339 to 360 (QLEVLTLDHNQLQEVKAGAFLG), 363 to 384 (NVAVMNLSGNCLRNLPEQVFRG), 387 to 408 (KLHSLHLEGSCLGRIRPHTFTG), 411 to 432 (GLRRLFLKDNGLVGIEEQSLWG), 435 to 456 (ELLELDLTSNQLTHLPHRLFQG), 459 to 480 (KLEYLLLSRNRLAELPADALGP), 483 to 504 (RAFWLDVSHNRLEALPNSLLAP), and 507 to 528 (RLRYLSLRNNSLRTFTPQPPGL). An N-linked (GlcNAc...) asparagine glycan is attached at N368. A glycan (N-linked (GlcNAc...) asparagine) is linked at N515. Residues 536–605 (NPWDCGCPLK…DLSEAHFAPC (70 aa)) enclose the LRRCT domain. 3 disulfide bridges follow: C540/C583, C542/C605, and C566/C571. N580 carries N-linked (GlcNAc...) asparagine glycosylation.

Forms a ternary complex with IGF1 and IGFBP3. In terms of tissue distribution, plasma.

The protein localises to the secreted. It localises to the extracellular space. Functionally, involved in protein-protein interactions that result in protein complexes, receptor-ligand binding or cell adhesion. The polypeptide is Insulin-like growth factor-binding protein complex acid labile subunit (IGFALS) (Homo sapiens (Human)).